A 622-amino-acid polypeptide reads, in one-letter code: Probable ATP-citrate synthase (622 aa).

Residues 228–248 (ALRY…ELGG) and 279–305 (FPTE…KNKA) each bind ATP. Residue glutamate 245 participates in Mg(2+) binding. The Tele-phosphohistidine intermediate role is filled by histidine 287. 306–316 (LREAGAVVPTS) is a CoA binding site.

It in the N-terminal section; belongs to the succinate/malate CoA ligase beta subunit family. In the C-terminal section; belongs to the succinate/malate CoA ligase alpha subunit family. In terms of assembly, homotetramer.

It is found in the cytoplasm. The enzyme catalyses oxaloacetate + acetyl-CoA + ADP + phosphate = citrate + ATP + CoA. In terms of biological role, catalyzes the cleavage of citrate into oxaloacetate and acetyl-CoA, the latter serving as common substrate in multiple biochemical reactions in protein, carbohydrate and lipid metabolism. The sequence is that of Probable ATP-citrate synthase (acly) from Dictyostelium discoideum (Social amoeba).